Here is a 360-residue protein sequence, read N- to C-terminus: DNA replication and repair protein RecF (360 aa).

30-37 contributes to the ATP binding site; the sequence is GRNAQGKT.

Belongs to the RecF family.

The protein localises to the cytoplasm. The RecF protein is involved in DNA metabolism; it is required for DNA replication and normal SOS inducibility. RecF binds preferentially to single-stranded, linear DNA. It also seems to bind ATP. This chain is DNA replication and repair protein RecF, found in Desulforudis audaxviator (strain MP104C).